Consider the following 1159-residue polypeptide: Dynein regulatory complex subunit 7 (1159 aa).

LRR repeat units follow at residues 21–46 (MEAR…FVEL), 51–74 (NPHI…LEEF), 75–97 (RYLR…VYRL), 99–120 (QLMV…IGHL), 121–143 (SLLK…LSTL), 144–166 (PKLE…LGEL), 168–189 (GVIK…MGQL), 190–212 (KKVQ…MGHL), and 214–235 (TLKE…KVEE). Kelch repeat units lie at residues 309–360 (MLLI…YDEE), 363–413 (RLVV…FWAG), 415–463 (MVLF…IGHG), 465–513 (LLFV…VHRD), and 515–571 (LYLL…LWNG). Over residues 827–837 (EDRGMRSRADG) the composition is skewed to basic and acidic residues. The disordered stretch occupies residues 827–857 (EDRGMRSRADGNADESETEGGGGLDDGEGVE). Positions 1050 to 1137 (VRIKAEESEE…RRLRRHEEQA (88 aa)) form a coiled coil.

It belongs to the DRC7 family. Component of the nexin-dynein regulatory complex (N-DRC). Interacts with DRC5. Phosphorylated.

It localises to the cell projection. The protein localises to the cilium. It is found in the flagellum. The protein resides in the cytoplasm. Its subcellular location is the cytoskeleton. It localises to the cilium axoneme. The protein localises to the flagellum axoneme. In terms of biological role, component of the nexin-dynein regulatory complex (N-DRC) a key regulator of ciliary/flagellar motility which maintains the alignment and integrity of the distal axoneme and regulates microtubule sliding in motile axonemes. Involved in the regulation of flagellar motility. This is Dynein regulatory complex subunit 7 (DRC7) from Chlamydomonas reinhardtii (Chlamydomonas smithii).